Here is a 3336-residue protein sequence, read N- to C-terminus: Pericentrin (3336 aa).

Disordered stretches follow at residues 1-71 and 81-100; these read MEVE…DICK and GAGGAFAAQPEDCDGEKRED. Positions 27–37 are enriched in basic and acidic residues; that stretch reads TKGDSSHSEKK. At serine 44 the chain carries Phosphoserine. Serine 188 carries the post-translational modification Phosphoserine. A Phosphothreonine modification is found at threonine 191. The stretch at 258–553 forms a coiled coil; the sequence is HTAQLELTQA…RLQGAREDAL (296 aa). The disordered stretch occupies residues 569–589; sequence KPEKGRKDHVDELEPERHKES. Phosphoserine occurs at positions 610 and 682. Coiled-coil stretches lie at residues 675 to 835 and 1010 to 1146; these read TEHK…DALH and TILT…MLKA. Serine 1245 bears the Phosphoserine mark. Residues 1299-1949 are a coiled coil; that stretch reads NEETAQVVRK…FLRCQVELDR (651 aa). Residues 1619–1638 are disordered; sequence TLDAGRCPEPPSGSPPEGPE. Residues 1626–1636 are compositionally biased toward pro residues; it reads PEPPSGSPPEG. A phosphoserine mark is found at serine 1653 and serine 1712. The tract at residues 1954–1974 is disordered; it reads RATAHTRVPGAHPQPRMDGGA. Serine 2044 is modified (phosphoserine). Positions 2064–2082 form a coiled coil; it reads VDLVAQVKQLQEKLNRLLY. Positions 2168–2214 are disordered; sequence SLIPDEMPDSPIQEKSECQDMSLSSPTSVLGGSRHQSHTAEAGPRKS. Phosphoserine is present on residues serine 2177, serine 2192, serine 2225, serine 2226, and serine 2327. Positions 2186–2197 are enriched in polar residues; sequence QDMSLSSPTSVL. The segment at 2318 to 2374 is disordered; it reads SFDSQETLSSPPPGLEGKADRSEKSDGSGFGARLSPGSGGPEAQTAGPVTPASISGR. The span at 2334 to 2343 shows a compositional bias: basic and acidic residues; the sequence is GKADRSEKSD. Phosphoserine occurs at positions 2352, 2355, 2477, and 2486. Residues 2536–3086 are a coiled coil; that stretch reads QEKLQHLRTA…EKLLKHHLQK (551 aa). Disordered stretches follow at residues 2875-2910 and 3084-3126; these read LEQSHPRLKEQEGRKAARRSAEARQSPAAAEQWRKW and LQKG…EEAH. Composition is skewed to basic and acidic residues over residues 2876 to 2896 and 3092 to 3102; these read EQSHPRLKEQEGRKAARRSAE and RSERSAWKPDE. The interaction with NEK2 stretch occupies residues 2983–3246; that stretch reads LSAARLLTSF…ARQPQSPPRT (264 aa). The segment at 3195–3208 is calmodulin-binding; that stretch reads RFRTAVRVVIAILR. The disordered stretch occupies residues 3224–3300; it reads ALAQGKAPRP…RSLTASQDPE (77 aa). Residues 3226–3240 show a composition bias toward low complexity; that stretch reads AQGKAPRPGPRARQP. Positions 3283–3297 are enriched in polar residues; the sequence is PSPNSRLERSLTASQ. A Phosphoserine modification is found at serine 3302.

Interacts with CHD3. Interacts with CHD4; the interaction regulates centrosome integrity. Interacts with DISC1 and PCM1. Binds calmodulin. Interacts with CDK5RAP2; the interaction is leading to centrosomal localization of PCNT and CDK5RAP2. Interacts with isoform 1 of NEK2. Interacts with CEP131. Interacts with CCDC13. Interacts with CEP68. Interacts with ATF5; the ATF5:PCNT:polyglutamylated tubulin (PGT) tripartite unites the mother centriole and the pericentriolar material (PCM) in the centrosome. In terms of processing, cleaved during mitotis which leads to removal of CDK5RAP2 from the centrosome and promotes centriole disengagement and subsequent centriole separation. The C-terminal fragment is rapidly degraded following cleavage. Post-translationally, ubiquitinated by TRIM43; leading to proteasomal degradation. In terms of tissue distribution, expressed in all tissues tested, including placenta, liver, kidney and thymus.

The protein localises to the cytoplasm. It is found in the cytoskeleton. Its subcellular location is the microtubule organizing center. The protein resides in the centrosome. Integral component of the filamentous matrix of the centrosome involved in the initial establishment of organized microtubule arrays in both mitosis and meiosis. Plays a role, together with DISC1, in the microtubule network formation. Is an integral component of the pericentriolar material (PCM). May play an important role in preventing premature centrosome splitting during interphase by inhibiting NEK2 kinase activity at the centrosome. The protein is Pericentrin (PCNT) of Homo sapiens (Human).